The primary structure comprises 465 residues: L-seryl-tRNA(Sec) selenium transferase (465 aa).

Residue Lys-294 is modified to N6-(pyridoxal phosphate)lysine.

It belongs to the SelA family. Pyridoxal 5'-phosphate serves as cofactor.

It localises to the cytoplasm. The enzyme catalyses L-seryl-tRNA(Sec) + selenophosphate + H(+) = L-selenocysteinyl-tRNA(Sec) + phosphate. Its pathway is aminoacyl-tRNA biosynthesis; selenocysteinyl-tRNA(Sec) biosynthesis; selenocysteinyl-tRNA(Sec) from L-seryl-tRNA(Sec) (bacterial route): step 1/1. Converts seryl-tRNA(Sec) to selenocysteinyl-tRNA(Sec) required for selenoprotein biosynthesis. This chain is L-seryl-tRNA(Sec) selenium transferase, found in Maridesulfovibrio salexigens (strain ATCC 14822 / DSM 2638 / NCIMB 8403 / VKM B-1763) (Desulfovibrio salexigens).